The following is a 137-amino-acid chain: ATP synthase epsilon chain, chloroplastic (137 aa).

This sequence belongs to the ATPase epsilon chain family. F-type ATPases have 2 components, CF(1) - the catalytic core - and CF(0) - the membrane proton channel. CF(1) has five subunits: alpha(3), beta(3), gamma(1), delta(1), epsilon(1). CF(0) has three main subunits: a, b and c.

It localises to the plastid. Its subcellular location is the chloroplast thylakoid membrane. In terms of biological role, produces ATP from ADP in the presence of a proton gradient across the membrane. The chain is ATP synthase epsilon chain, chloroplastic from Pinus thunbergii (Japanese black pine).